The chain runs to 101 residues: Urease subunit gamma (101 aa).

The protein belongs to the urease gamma subunit family. In terms of assembly, heterotrimer of UreA (gamma), UreB (beta) and UreC (alpha) subunits. Three heterotrimers associate to form the active enzyme.

The protein localises to the cytoplasm. The catalysed reaction is urea + 2 H2O + H(+) = hydrogencarbonate + 2 NH4(+). The protein operates within nitrogen metabolism; urea degradation; CO(2) and NH(3) from urea (urease route): step 1/1. The chain is Urease subunit gamma from Corynebacterium kroppenstedtii (strain DSM 44385 / JCM 11950 / CIP 105744 / CCUG 35717).